The primary structure comprises 439 residues: Amino-acid acetyltransferase (439 aa).

Residues 289–429 (EDIRIATVQD…DHYNYQRRSK (141 aa)) enclose the N-acetyltransferase domain.

Belongs to the acetyltransferase family. ArgA subfamily.

The protein resides in the cytoplasm. The catalysed reaction is L-glutamate + acetyl-CoA = N-acetyl-L-glutamate + CoA + H(+). It participates in amino-acid biosynthesis; L-arginine biosynthesis; N(2)-acetyl-L-ornithine from L-glutamate: step 1/4. This Mannheimia succiniciproducens (strain KCTC 0769BP / MBEL55E) protein is Amino-acid acetyltransferase.